The chain runs to 368 residues: Transmembrane protein 26 (368 aa).

Transmembrane regions (helical) follow at residues 4 to 24 (LVFL…LVGV), 36 to 56 (YWLL…TLKF), and 65 to 85 (FSPA…LLEL). Asn-110 carries N-linked (GlcNAc...) asparagine glycosylation. A run of 5 helical transmembrane segments spans residues 150 to 170 (QTFL…GGIT), 177 to 197 (LLLM…ETLE), 208 to 228 (VYAI…DLAV), 257 to 277 (IGIS…ILMT), and 281 to 301 (VINQ…VLQL). The tract at residues 324–368 (GEHGCRAQTSESGPSQRDWQNESKEGLAIPLRGSPVTSDDSHHTP) is disordered. The segment covering 330–341 (AQTSESGPSQRD) has biased composition (polar residues).

It localises to the membrane. In Homo sapiens (Human), this protein is Transmembrane protein 26 (TMEM26).